A 118-amino-acid polypeptide reads, in one-letter code: Holo-[acyl-carrier-protein] synthase (118 aa).

D8 and E58 together coordinate Mg(2+).

This sequence belongs to the P-Pant transferase superfamily. AcpS family. Requires Mg(2+) as cofactor.

It is found in the cytoplasm. It carries out the reaction apo-[ACP] + CoA = holo-[ACP] + adenosine 3',5'-bisphosphate + H(+). Functionally, transfers the 4'-phosphopantetheine moiety from coenzyme A to a Ser of acyl-carrier-protein. The protein is Holo-[acyl-carrier-protein] synthase of Streptococcus pyogenes serotype M1.